The following is a 252-amino-acid chain: MQNYKVTISYDGHYFEGFQTQNRPGSRTVQDELIKVVSKMAKTKIKVIGASRTDAGVHANGQVINFIFPFDLNEKAILMGMNSQLPTDILVKKVEKVPINFNARHSSHRKRYLYRVSTSKFIDPFKRFYTGHYFWNLDTNKIQEALPDLIGEHDFSSFAASGNQTATTIRTVTKAELKIFPKNNELLFTFEGNAFLYNQIRIMVGVLLEIGNGTRPVHDIIRLIKIKDRQQARFTAPASGLYLDEVYYESMD.

Asp-54 serves as the catalytic Nucleophile. Position 112 (Tyr-112) interacts with substrate.

The protein belongs to the tRNA pseudouridine synthase TruA family. Homodimer.

The enzyme catalyses uridine(38/39/40) in tRNA = pseudouridine(38/39/40) in tRNA. Its function is as follows. Formation of pseudouridine at positions 38, 39 and 40 in the anticodon stem and loop of transfer RNAs. The polypeptide is tRNA pseudouridine synthase A (Oenococcus oeni (strain ATCC BAA-331 / PSU-1)).